A 233-amino-acid polypeptide reads, in one-letter code: Opacity protein opA67 (233 aa).

Residue A1 is a signal peptide.

This sequence belongs to the opacity porin family.

The protein localises to the cell outer membrane. Implicated in a number of adherence functions. OPA proteins are implicated in pathogenesis and are subject to phase variation. The chain is Opacity protein opA67 from Neisseria gonorrhoeae.